Consider the following 235-residue polypeptide: Small ribosomal subunit protein uS10m (235 aa).

The N-terminal 19 residues, 1–19 (MLRTSVRSPLLYRCLSKRF), are a transit peptide targeting the mitochondrion.

The protein belongs to the universal ribosomal protein uS10 family. In terms of assembly, part of the mitochondrial small ribosomal subunit.

The protein resides in the mitochondrion. Functionally, involved in mitochondrial genome encoded proteins translation. Involved in the binding of tRNA to the ribosomes. The protein is Small ribosomal subunit protein uS10m (RSM10) of Candida glabrata (strain ATCC 2001 / BCRC 20586 / JCM 3761 / NBRC 0622 / NRRL Y-65 / CBS 138) (Yeast).